A 1779-amino-acid chain; its full sequence is MSASRSSTKFSTPAEGSDNGKEFTTPATSTEGHEVPDRPGDALADVAIIGMACRTPGDVRSPDSLWQYLLKKGDASGSLPDWRWEPYRQRHPRNAALLAQTTAKGYFLDDIDHFDAAFFSISPREAEQMDPQQRLALEVAWEALENAGISPPQLAGSNTSVYMGVNSDDYAKLLLEDLPNVDAHMGVGTAYCGIPSRISYILDLMGPSVALDAACASSLVAVHHARQAIRAGETDLAIAGGVNALLGPGLTRVLDEAGAISTDGKCRSFDETASGYGRGEGAGVVILKRLDKALADGDHVLAVLKGSAVASDGKTLGIMAPNARAQLLVAQKALAEAKVSADSINYVEAHATSTSLGDPTETNALAEVYGAGSGRSPSDPCYIGSIKPNIGHLEAGAGVMGLIKAVLVLRHGQVPPQANLKTLNSKIAWNENLLCPPRELVTLPCPGPIHPLRAAVASYGYSGTVSHAVLEAFAGHSEFAERLSQIPTGDDPSPVLLLISAPQARRVSAAAGALKQWLSENEASISLKTVSSTLAQRRAHHRYRHAIVADSVPDAIAALDDVSKEAPNRWVIKDKIDSKAAKGPVWIFSGHGAQWADMGRELFESSPAFEEVVRNLEPIIQDEVGFSAIETLQKGCPDRSDVVQVMTFLMHLGIAAVLEIESGPPSAVVGHSLGEAAAAVVSGALTWREGALVVCRRARLYRELMGQGAMALVRVSAEEARTRIGRQTGVWVAIETSPSACVLSGEVDAIKQLSDRWREEGIEVRMVASDVPFHTPMLERLAKPLYESLRGELHPRVPNRALFSTSQPDPRSEVLRDAQYWVTNMIQPVRLQSAIAAIAQDGFRALVEVSSHPIVTHSVVETMGECTEDPVLVTPTMVRRQPALKSILAATGRLHCFGCAIKFIELDPNAPWNSSVPSTVWHHQPFYRAVSQTSASSQLETTHDPAANNLLGKRIALWGTEEVLYQTRLEEENRPFPGHHPLHGSEIVPAAVLLRTFLQALTPRCVEQVSLQVPVVVSPARKVQIRHNTRNITITSCLEESSSQEDGSWLVNTTAAVGAANVVPSQSRMDLSELRKRLPQKLADSFSIDYLASVGVSAMGFPWQVTHHVASDDEMLARVDANPDNMGGMNDFLTSLMDAATSISSTLWHRQPLLRMPTSVRRVVAVHEIPIPRVVYIHCTKVASTSECTADVTLTGEDGTVLMEIQGMSFAGLEGESFSRKSTAGLVHQIQWPPAALVEDPSEFSHIAFVTPDITDPRLEQYQSQLDALAITSSVHQAASDLPLTSHTSLAVVYLPQTMTDVFDTATRSCNDLVSIIQTITAAASSTTRVFVLTAGTELGHSALLGLSRIIQAEHPDIWGSLIEVEDTFSLPLMAMRYVRDADVIRIKDGVPRIARLRPLPSASSSLTPLTFSPASTYLITGGLGALGLSVAHWMVTQGARRLLLLSRRALPPRSTWSSTHMNNPTIQSILALERLGATVHCLPIDISLPMAASGLRSTLETLNLPSVAGVIHAAGIVSDQLVEQVTPDVLESVLAPKIKGALNLHDVFPPASLDFFVLFSSCGQLLGFPGQASYASGNAFLDGLARSRRAQGDNAISLLWTTWRGMGMGQSANGAMEAELYARGITDITPDEAFRAWSAVASTGGGGTDHAVIVRARVLEGGEPLPHPILTDIATRKAEVVNAGEHPAGSQEVKLSGRELEQHLRDVINGCVSKTLSVKEDEIDDAVALAEMGMDSVMTVNFRMTLQQTLKVPVGPTLIWKCPTVQHLVKHFTKELDA.

Positions 1–11 (MSASRSSTKFS) are enriched in polar residues. The segment at 1 to 40 (MSASRSSTKFSTPAEGSDNGKEFTTPATSTEGHEVPDRPG) is disordered. Basic and acidic residues predominate over residues 31–40 (EGHEVPDRPG). Positions 43 to 472 (LADVAIIGMA…GTVSHAVLEA (430 aa)) constitute a Ketosynthase family 3 (KS3) domain. Residues cysteine 215, histidine 350, and histidine 392 each act as for beta-ketoacyl synthase activity in the active site. A malonyl-CoA:ACP transacylase (MAT) domain region spans residues 586–883 (WIFSGHGAQW…TPTMVRRQPA (298 aa)). Residue serine 672 is the For acyl/malonyl transferase activity of the active site. The product template (PT) domain stretch occupies residues 942 to 1218 (THDPAANNLL…SFAGLEGESF (277 aa)). The tract at residues 948-1064 (NNLLGKRIAL…AAVGAANVVP (117 aa)) is N-terminal hotdog fold. Positions 948 to 1219 (NNLLGKRIAL…FAGLEGESFS (272 aa)) constitute a PKS/mFAS DH domain. The Proton acceptor; for dehydratase activity role is filled by histidine 980. Residues 1079 to 1219 (PQKLADSFSI…FAGLEGESFS (141 aa)) are C-terminal hotdog fold. The active-site Proton donor; for dehydratase activity is the aspartate 1138. The region spanning 1703–1777 (QHLRDVINGC…HLVKHFTKEL (75 aa)) is the Carrier domain. An O-(pantetheine 4'-phosphoryl)serine modification is found at serine 1737.

It carries out the reaction 3 malonyl-CoA + acetyl-CoA + NADPH + 3 H(+) = 6-methylsalicylate + 3 CO2 + NADP(+) + 4 CoA + H2O. Its pathway is secondary metabolite biosynthesis; terpenoid biosynthesis. Functionally, non-reducing polyketide synthase; part of the gene cluster that mediates the biosynthesis of yanuthone D, a fungal isoprenoid epoxycyclohexenone that acts as an antibiotic against fungi and bacteria. The first step of the pathway is the synthesis of 6-methylsalicylic acid (6-MSA) by the polyketide synthase yanA. 6-MSA is then converted to m-cresol by the decarboxylase yanB. The cytochrome P450 monooxygenase yanC then catalyzes the oxidation of m-cresol to toluquinol. Epoxidation of toluquinol is then performed by the short chain dehydrogenase yanD, with the help of yanE, and a further prenylation by yanG leads to 7-deacetoxyyanuthone A. The next step is the hydroxylation of C-22 of 7-deacetoxyyanuthone A by the cytochrome P450 monooxygenase yanH to yield 22-deacetylyanuthone A. O-Mevalon transferase yanI then attaches mevalon to the hydroxyl group of 22-deacetylyanuthone A to produce yanuthone E. Finally, the FAD-dependent monooxygenase yanF oxidizes the hydroxyl group at C15 of yanuthone E to form yanuthone D. Furthermore, several branching points in the pathway lead to the production of yanuthones F and G from 7-deacetoxyyanuthone A; yanuthones H and I from 22-deacetylyanuthone A; and yanuthone J from yanuthone E. In Aspergillus niger (strain ATCC 1015 / CBS 113.46 / FGSC A1144 / LSHB Ac4 / NCTC 3858a / NRRL 328 / USDA 3528.7), this protein is 6-methylsalicylic acid synthase.